We begin with the raw amino-acid sequence, 165 residues long: Glycine cleavage system H protein, mitochondrial (165 aa).

A Lipoyl-binding domain is found at 57 to 139 (NAIVGISSYA…YEKGWLFKVD (83 aa)). Lys98 carries the post-translational modification N6-lipoyllysine.

The protein belongs to the GcvH family. As to quaternary structure, the glycine cleavage system is composed of four proteins: P, T, L and H. The cofactor is (R)-lipoate.

It is found in the mitochondrion. Its function is as follows. The glycine cleavage system catalyzes the degradation of glycine. The H protein shuttles the methylamine group of glycine from the P protein to the T protein. The polypeptide is Glycine cleavage system H protein, mitochondrial (ppl) (Drosophila melanogaster (Fruit fly)).